The primary structure comprises 392 residues: GDP-mannose transporter (392 aa).

The segment at 1 to 40 (MANKRNEDIELGPAEGRGSTDKDPFLARRSSSQPNRPQQA) is disordered. Over 1 to 55 (MANKRNEDIELGPAEGRGSTDKDPFLARRSSSQPNRPQQAGPFGGYFDKIDHSPG) the chain is Cytoplasmic. Positions 29–38 (RSSSQPNRPQ) are enriched in polar residues. Residues 56 to 76 (ASIIAYCLSSISMTVVNKYVV) traverse the membrane as a helical segment. At 77-80 (SGSE) the chain is on the lumenal side. Residues 81 to 101 (WNLNFFYLAVQSLVCTAAILI) form a helical membrane-spanning segment. Residues 102–121 (CKQLGMFQNLAAFDSTKAKK) lie on the Cytoplasmic side of the membrane. Residues 122–144 (WFPISLLLVGMIYTSTKALQFLS) form a helical membrane-spanning segment. Residues 145–149 (VPVYT) are Lumenal-facing. The helical transmembrane segment at 150–168 (IFKNLTIIVVAYGEVLWFG) threads the bilayer. Topologically, residues 169–174 (GSVTPM) are cytoplasmic. The chain crosses the membrane as a helical span at residues 175-198 (ALLSFGLMVLSSVIAAWADIQAAV). At 199-213 (EGVGHTAEATDAIST) the chain is on the lumenal side. Residues 214–234 (LNAGYAWMGMNVFCTAAYLLG) traverse the membrane as a helical segment. The Cytoplasmic portion of the chain corresponds to 235-248 (MRKVIKKMNFKDYD). The helical transmembrane segment at 249 to 269 (TMFYNNLLTIPVLIVFSLLFE) threads the bilayer. Topologically, residues 270-287 (DWSNDNLIKNFPVETRNS) are lumenal. A helical transmembrane segment spans residues 288–308 (LFIGMIYSGLAAIFISYCSAW). Over 309 to 316 (CIRVTSST) the chain is Cytoplasmic. The chain crosses the membrane as a helical span at residues 317 to 337 (TYSMVGALNKLPLAISGLIFF). Residues 338 to 342 (DAPVT) lie on the Lumenal side of the membrane. Residues 343 to 361 (FGSVTAIFVGFVSGLVYTW) traverse the membrane as a helical segment. Topologically, residues 362–392 (SKTRQKVSQILPTTQPTMSASAASNRDAANA) are cytoplasmic.

This sequence belongs to the TPT transporter family. SLC35D subfamily. In terms of assembly, homooligomer.

It is found in the golgi apparatus membrane. The protein resides in the cytoplasmic vesicle membrane. The protein localises to the endoplasmic reticulum membrane. Functionally, involved in the import of GDP-mannose from the cytoplasm into the Golgi lumen. The sequence is that of GDP-mannose transporter (vrg-4) from Neurospora crassa (strain ATCC 24698 / 74-OR23-1A / CBS 708.71 / DSM 1257 / FGSC 987).